Reading from the N-terminus, the 1370-residue chain is Reverse gyrase 1 (1370 aa).

The segment at 6–47 adopts an RG N-terminal-type zinc-finger fold; the sequence is AASRGVYRYLCPNCGGPNSEERLSRGLPCPRCLPRLPRKGVS. Positions 16, 19, 34, and 37 each coordinate Zn(2+). Residues Q95 and 112–119 each bind ATP; that span reads APTGVGKT. A Helicase ATP-binding domain is found at 99 to 287; it reads AKRLARGDSF…RKKLLEVKRR (189 aa). Residues 220 to 223 carry the DEAD box motif; that stretch reads DDVD. A topoisomerase I region spans residues 643 to 1370; sequence ELVRTALLVV…VSRVWGAGVG (728 aa). The Toprim domain occupies 647–825; sequence TALLVVESPN…DIKRLEFHEV (179 aa). A Mg(2+)-binding site is contributed by E653. The segment at 744–772 adopts an RG C-terminal-type zinc-finger fold; it reads IKRCLDCGYQFVDEASRCPRCGSELIRNS. C747, C750, C761, and C764 together coordinate Zn(2+). A Mg(2+)-binding site is contributed by D794. The Topo IA-type catalytic domain occupies 841 to 1323; it reads DDNLVDAQVV…SVFNEISDLA (483 aa). Catalysis depends on Y1028, which acts as the O-(5'-phospho-DNA)-tyrosine intermediate.

It in the N-terminal section; belongs to the DEAD box helicase family. DDVD subfamily. The protein in the C-terminal section; belongs to the type IA topoisomerase family. In terms of assembly, monomer. Zn(2+) serves as cofactor. Requires Mg(2+) as cofactor.

It localises to the cytoplasm. It catalyses the reaction ATP + H2O = ADP + phosphate + H(+). Its function is as follows. Modifies the topological state of DNA by introducing positive supercoils in an ATP-dependent process, increasing the linking number in steps of +1. Binds to single-stranded DNA, transiently cleaves and then rejoins the ends, introducing a positive supercoil in the process. The scissile phosphodiester is attacked by the catalytic tyrosine of the enzyme, resulting in the formation of a DNA-(5'-phosphotyrosyl)-enzyme intermediate. Probably involved in rewinding DNA strands in regions of the chromosome that have opened up to allow replication, transcription, DNA repair and/or for DNA protection. The sequence is that of Reverse gyrase 1 from Aeropyrum pernix (strain ATCC 700893 / DSM 11879 / JCM 9820 / NBRC 100138 / K1).